The primary structure comprises 500 residues: Protein O-glucosyltransferase 2 (500 aa).

A signal peptide spans 1-22 (MLRKLLLLLMSCIIFLTRRSKA). The Filamin repeat unit spans residues 23–128 (AAAASASKTL…LVGKSPYVLR (106 aa)). 2 N-linked (GlcNAc...) asparagine glycosylation sites follow: asparagine 60 and asparagine 259. The Prevents secretion from ER signature appears at 497-500 (RDEL).

It belongs to the KDELC family.

The protein localises to the endoplasmic reticulum lumen. The enzyme catalyses L-seryl-[EGF-like domain protein] + UDP-alpha-D-glucose = 3-O-(beta-D-glucosyl)-L-seryl-[EGF-like domain protein] + UDP + H(+). It catalyses the reaction L-seryl-[EGF-like domain protein] + UDP-alpha-D-xylose = 3-O-(beta-D-xylosyl)-L-seryl-[EGF-like domain protein] + UDP + H(+). The protein operates within protein modification; protein glycosylation. In terms of biological role, protein glucosyltransferase that catalyzes the transfer of glucose from UDP-glucose to a serine residue within the consensus sequence peptide C-X-N-T-X-G-S-F-X-C. Can also catalyze the transfer of xylose from UDP-xylose but less efficiently. The chain is Protein O-glucosyltransferase 2 (poglut2) from Danio rerio (Zebrafish).